We begin with the raw amino-acid sequence, 334 residues long: Endochitinase 3 (334 aa).

The first 23 residues, 1–23 (MRLLEFTALSSLLVLFLLLAVSA), serve as a signal peptide directing secretion. Residues 24–65 (EQCGKQAGGARCPSGMCCSNFGWCGNTQDYCGPGKCQSQCPS) form the Chitin-binding type-1 domain. Disulfide bonds link cysteine 26–cysteine 41, cysteine 35–cysteine 47, cysteine 40–cysteine 54, and cysteine 59–cysteine 63. Residues 64–84 (PSGPGPTPRPPTPTPGPSTGD) form a disordered region. The span at 66–79 (GPGPTPRPPTPTPG) shows a compositional bias: pro residues. 3 positions are modified to 4-hydroxyproline: proline 73, proline 74, and proline 76. 3 disulfide bridges follow: cysteine 106/cysteine 168, cysteine 180/cysteine 188, and cysteine 287/cysteine 319. The Proton donor role is filled by glutamate 150. A propeptide spans 328–334 (GLLLETM) (removed in mature form).

The protein belongs to the glycosyl hydrolase 19 family. Chitinase class I subfamily. The 4-hydroxyproline residues are not glycosylated in this plant vacuolar protein.

Its subcellular location is the vacuole. It carries out the reaction Random endo-hydrolysis of N-acetyl-beta-D-glucosaminide (1-&gt;4)-beta-linkages in chitin and chitodextrins.. Functionally, defense against chitin-containing fungal pathogens. This Nicotiana tabacum (Common tobacco) protein is Endochitinase 3 (CHN14).